A 296-amino-acid polypeptide reads, in one-letter code: NmrA-like family domain-containing protein 1 (296 aa).

NADP(+) is bound by residues Gly11–Gln16, Arg37–Arg41, Asp58–Gln59, Thr79–Phe81, Lys133, and Tyr155–Asn158.

This sequence belongs to the NmrA-type oxidoreductase family. As to quaternary structure, homodimer.

It is found in the cytoplasm. It localises to the perinuclear region. The protein localises to the nucleus. In terms of biological role, redox sensor protein. Undergoes restructuring and subcellular redistribution in response to changes in intracellular NADPH/NADP(+) levels. The chain is NmrA-like family domain-containing protein 1 (NMRAL1) from Gallus gallus (Chicken).